The sequence spans 185 residues: uncharacterized protein (185 aa).

The residue at position 1 (methionine 1) is an N-acetylmethionine. Basic and acidic residues-rich tracts occupy residues 1–18 (MDAF…QDKQ), 26–47 (TPSD…TTEE), and 59–71 (SNED…PVLE). 2 disordered regions span residues 1 to 71 (MDAF…PVLE) and 155 to 185 (DHDR…DGLL). The segment covering 170-185 (LPEELETDQDFLDGLL) has biased composition (acidic residues).

This is an uncharacterized protein from Saccharomyces cerevisiae (strain ATCC 204508 / S288c) (Baker's yeast).